The primary structure comprises 793 residues: Phenylalanine--tRNA ligase beta subunit (793 aa).

The region spanning 39 to 148 (AGQFTHVIVA…DEAPIGMDLR (110 aa)) is the tRNA-binding domain. The 77-residue stretch at 401 to 477 (PGTVSFLFDT…RLYGYDKLQA (77 aa)) folds into the B5 domain. Residues aspartate 455, aspartate 461, glutamate 464, and glutamate 465 each contribute to the Mg(2+) site. In terms of domain architecture, FDX-ACB spans 698-792 (SKYPQIRRDL…LENEFSILLR (95 aa)).

The protein belongs to the phenylalanyl-tRNA synthetase beta subunit family. Type 1 subfamily. Tetramer of two alpha and two beta subunits. Mg(2+) is required as a cofactor.

Its subcellular location is the cytoplasm. The enzyme catalyses tRNA(Phe) + L-phenylalanine + ATP = L-phenylalanyl-tRNA(Phe) + AMP + diphosphate + H(+). The chain is Phenylalanine--tRNA ligase beta subunit from Legionella pneumophila (strain Paris).